The chain runs to 343 residues: Ornithine carbamoyltransferase (343 aa).

Carbamoyl phosphate contacts are provided by residues 62 to 65 (STRT), glutamine 89, arginine 113, and 140 to 143 (HPTQ). Residues asparagine 172, aspartate 236, and 240 to 241 (SM) each bind L-ornithine. Carbamoyl phosphate is bound by residues 278–279 (CL) and arginine 323.

Belongs to the aspartate/ornithine carbamoyltransferase superfamily. OTCase family.

It localises to the cytoplasm. The enzyme catalyses carbamoyl phosphate + L-ornithine = L-citrulline + phosphate + H(+). It functions in the pathway amino-acid degradation; L-arginine degradation via ADI pathway; carbamoyl phosphate from L-arginine: step 2/2. In terms of biological role, reversibly catalyzes the transfer of the carbamoyl group from carbamoyl phosphate (CP) to the N(epsilon) atom of ornithine (ORN) to produce L-citrulline. The sequence is that of Ornithine carbamoyltransferase from Levilactobacillus brevis (strain ATCC 367 / BCRC 12310 / CIP 105137 / JCM 1170 / LMG 11437 / NCIMB 947 / NCTC 947) (Lactobacillus brevis).